A 201-amino-acid polypeptide reads, in one-letter code: MDEMDNVIRSLEQEYRLILLLNHRNKNQHRAASWYGSFNEMKRNCGQIITLFSSRRLQAKRLKDVEWVKLHRLLQRALFRQLKRWYWQFNGVIALGQFVTLGCTLVTLLANVRALYMRLWEINETEFIRCGCLIKNLPRTKAKSVVNDVEELGEIIDEDIGNNVQENELVITSIPKPLTENCKKKKKRKKKNKSAIDGIFG.

Residues 86–108 (YWQFNGVIALGQFVTLGCTLVTL) form a helical membrane-spanning segment.

Component of RNase MRP complex which consists of an RNA moiety and at least 10 protein subunits including POP1, POP3, POP4, POP5, POP6, POP7, POP8, RMP1, RPP1 and SNM1, many of which are shared with the RNase P complex.

Its subcellular location is the membrane. It is found in the cytoplasm. The protein localises to the nucleus. Functionally, functions as part of ribonuclease MRP (RNase MRP), which is involved in rRNA processing in mitochondria. In Saccharomyces cerevisiae (strain ATCC 204508 / S288c) (Baker's yeast), this protein is Ribonuclease MRP protein subunit RMP1.